Reading from the N-terminus, the 506-residue chain is MSISIRPDEISSIIQQQIEQYDQEVKVANVGTVLQVGDGIARIYGLEKAMAGELLEFEDGTIGIAQNLEEDNVGAVLMGEGLEIQEGSSVTATGRIAQIPVGEALIGRVVDALGRPIDGKGDIKSSESRLIESPAPGIIARRSVHEPMQTGITAIDSMIPIGRGQRELIIGDRQTGKTAIAIDTIINQKEEDVICVYVAIGQKASTVANVVQTLQEKGAMDYTIVVAASASEPATLQYLAPYTGATIAEYFMYKGKATLVIYDDLSKQAQAYRQMSLLLRRPPGREAYPGDVFYIHSRLLERAAKLSDELGKGSMTALPIIETQAGDVSAYIPTNVISITDGQIFLSSDLFNAGIRPAVNPGISVSRVGSAAQTKAMKKVAGKIKLELAQFDDLQAFAQFASDLDKATQDQLARGQRLRELLKQPQNSPLSVYEQVAILYAGINGYLDDVPVDKVTSFTQGLREYLKTGKTQYAEGVRTSKALGDAEEAALKEALTEYKKTFKAAA.

171–178 is an ATP binding site; the sequence is GDRQTGKT.

Belongs to the ATPase alpha/beta chains family. F-type ATPases have 2 components, CF(1) - the catalytic core - and CF(0) - the membrane proton channel. CF(1) has five subunits: alpha(3), beta(3), gamma(1), delta(1), epsilon(1). CF(0) has four main subunits: a, b, b' and c.

Its subcellular location is the cellular thylakoid membrane. The enzyme catalyses ATP + H2O + 4 H(+)(in) = ADP + phosphate + 5 H(+)(out). Functionally, produces ATP from ADP in the presence of a proton gradient across the membrane. The alpha chain is a regulatory subunit. In Nostoc punctiforme (strain ATCC 29133 / PCC 73102), this protein is ATP synthase subunit alpha.